We begin with the raw amino-acid sequence, 207 residues long: Probable flagellin 2 (207 aa).

Residues 1–14 (MRVGSRKLRRDEKG) constitute a propeptide that is removed on maturation.

This sequence belongs to the archaeal flagellin family.

It is found in the archaeal flagellum. Flagellin is the subunit protein which polymerizes to form the filaments of archaeal flagella. The polypeptide is Probable flagellin 2 (flaB2) (Archaeoglobus fulgidus (strain ATCC 49558 / DSM 4304 / JCM 9628 / NBRC 100126 / VC-16)).